A 162-amino-acid polypeptide reads, in one-letter code: NADH-quinone oxidoreductase subunit I (162 aa).

4Fe-4S ferredoxin-type domains lie at arginine 54–glutamate 83 and threonine 93–isoleucine 122. The [4Fe-4S] cluster site is built by cysteine 63, cysteine 66, cysteine 69, cysteine 73, cysteine 102, cysteine 105, cysteine 108, and cysteine 112.

Belongs to the complex I 23 kDa subunit family. NDH-1 is composed of 14 different subunits. Subunits NuoA, H, J, K, L, M, N constitute the membrane sector of the complex. [4Fe-4S] cluster is required as a cofactor.

The protein localises to the cell inner membrane. The catalysed reaction is a quinone + NADH + 5 H(+)(in) = a quinol + NAD(+) + 4 H(+)(out). In terms of biological role, NDH-1 shuttles electrons from NADH, via FMN and iron-sulfur (Fe-S) centers, to quinones in the respiratory chain. The immediate electron acceptor for the enzyme in this species is believed to be ubiquinone. Couples the redox reaction to proton translocation (for every two electrons transferred, four hydrogen ions are translocated across the cytoplasmic membrane), and thus conserves the redox energy in a proton gradient. The chain is NADH-quinone oxidoreductase subunit I from Burkholderia ambifaria (strain MC40-6).